The primary structure comprises 342 residues: Protein rough sheath 2 homolog (342 aa).

HTH myb-type domains lie at 1-58 (MQPP…KNYL) and 59-113 (RPGI…EKQQ). DNA-binding regions (H-T-H motif) lie at residues 32–58 (WSLV…KNYL) and 86–109 (WKKI…EVFK). Residues 253-304 (RRREATEEFEAKMRALREEQAAAVERVEAEYREKMAGLRRDAEAKEQKMAEQ) adopt a coiled-coil conformation.

It localises to the nucleus. Its function is as follows. Transcription factor required for normal cell differentiation. May interact with other proteins to repress the knox homeobox genes. This chain is Protein rough sheath 2 homolog (RS2), found in Oryza sativa subsp. japonica (Rice).